A 302-amino-acid polypeptide reads, in one-letter code: Sulfate adenylyltransferase subunit 2 (302 aa).

The disordered stretch occupies residues 280–302 (RQGRAIDHDQSGSMELKKRQGYF).

Belongs to the PAPS reductase family. CysD subfamily. As to quaternary structure, heterodimer composed of CysD, the smaller subunit, and CysN.

The enzyme catalyses sulfate + ATP + H(+) = adenosine 5'-phosphosulfate + diphosphate. It participates in sulfur metabolism; hydrogen sulfide biosynthesis; sulfite from sulfate: step 1/3. Functionally, with CysN forms the ATP sulfurylase (ATPS) that catalyzes the adenylation of sulfate producing adenosine 5'-phosphosulfate (APS) and diphosphate, the first enzymatic step in sulfur assimilation pathway. APS synthesis involves the formation of a high-energy phosphoric-sulfuric acid anhydride bond driven by GTP hydrolysis by CysN coupled to ATP hydrolysis by CysD. The polypeptide is Sulfate adenylyltransferase subunit 2 (Vibrio cholerae serotype O1 (strain ATCC 39541 / Classical Ogawa 395 / O395)).